The following is a 388-amino-acid chain: Glycoprotein-N-acetylgalactosamine 3-beta-galactosyltransferase 1 (388 aa).

Residues 1 to 12 (MAPISHYIGKTS) lie on the Cytoplasmic side of the membrane. Residues 13-30 (LTTLAIGIAIGITVSNIV) traverse the membrane as a helical; Signal-anchor for type II membrane protein segment. The Lumenal portion of the chain corresponds to 31–388 (KFSSTQRRHF…LAQTDSKHIS (358 aa)). A disordered region spans residues 43-65 (SGYIPDSPHSHGENDFVEGPDDS). A glycan (N-linked (GlcNAc...) asparagine) is linked at N80. C95 and C119 are joined by a disulfide. UDP contacts are provided by M98, N100, E142, G143, R144, K150, and D173. D173 and D175 together coordinate Mn(2+). Cysteines 238 and 253 form a disulfide. W292 contacts a glycoprotein. Cysteines 307 and 308 form a disulfide. Positions 316 and 317 each coordinate UDP. H316 lines the Mn(2+) pocket. The disordered stretch occupies residues 344–388 (STEEQDHGSSHKDTDAMKPEGKGMEDKEDEETNISLAQTDSKHIS). Positions 347-368 (EQDHGSSHKDTDAMKPEGKGME) are enriched in basic and acidic residues. N376 is a glycosylation site (N-linked (GlcNAc...) asparagine).

Belongs to the glycosyltransferase 31 family. Beta3-Gal-T subfamily. Homodimer; disulfide-linked. Mn(2+) serves as cofactor.

The protein localises to the membrane. It catalyses the reaction an N-acetyl-alpha-D-galactosaminyl derivative + UDP-alpha-D-galactose = a beta-D-galactosyl-(1-&gt;3)-N-acetyl-alpha-D-galactosaminyl derivative + UDP + H(+). It functions in the pathway protein modification; protein glycosylation. In terms of biological role, glycosyltransferase that generates the core 1 O-glycan Gal-beta1-3GalNAc-alpha1-Ser/Thr (T antigen), which is a precursor for many extended O-glycans in glycoproteins. The protein is Glycoprotein-N-acetylgalactosamine 3-beta-galactosyltransferase 1 of Biomphalaria glabrata (Bloodfluke planorb).